The following is a 437-amino-acid chain: Type II methyltransferase M.HgiCII (437 aa).

An SAM-dependent MTase C5-type domain is found at 4 to 431 (FRFIDLFAGI…KALPNDHLFE (428 aa)). The active site involves Cys75.

It belongs to the class I-like SAM-binding methyltransferase superfamily. C5-methyltransferase family.

It carries out the reaction a 2'-deoxycytidine in DNA + S-adenosyl-L-methionine = a 5-methyl-2'-deoxycytidine in DNA + S-adenosyl-L-homocysteine + H(+). In terms of biological role, a methylase that recognizes the double-stranded sequence 5'-GGWCC-3', methylates C-? on both strands and protects the DNA from cleavage by the HgiCII endonuclease. The sequence is that of Type II methyltransferase M.HgiCII from Herpetosiphon aurantiacus (Herpetosiphon giganteus).